A 129-amino-acid polypeptide reads, in one-letter code: Protein BUNDLE SHEATH DEFECTIVE 2, chloroplastic (129 aa).

Residues 1 to 43 constitute a chloroplast transit peptide; that stretch reads MAATASLTTTAPSPPALLKASAPLLISFRPVSRHCKNLCIKTK. The segment at 49-123 adopts a CR-type zinc-finger fold; that stretch reads QSAKKHQKVK…AGFLGGFLST (75 aa). Zn(2+)-binding residues include cysteine 62, cysteine 65, asparagine 68, cysteine 73, cysteine 76, cysteine 97, cysteine 100, glutamate 105, cysteine 108, and cysteine 111.

The protein belongs to the BSD2 chaperone family. As to quaternary structure, interacts with the RuBisCo large subunit (RbcL) assembled as an intermediate complex made of eight RbcL and eight BSD2 subunits. Expressed in shoot tissues, in both bundle sheath and mesophyll cells.

It localises to the plastid. Its subcellular location is the chloroplast stroma. Its function is as follows. Chloroplast chaperone required for RuBisCo complex biogenesis and translational regulation of the RuBisCo large subunit (RbcL). Stabilizes an end-state assembly intermediate of eight RbcL subunits until the small subunits (RBCSs) become available to produce a complete stable RuBisCo complex containing eight small and eight large subunits. Involved in the differentiation of bundle sheath cells, especially chloroplast structure. The polypeptide is Protein BUNDLE SHEATH DEFECTIVE 2, chloroplastic (Zea mays (Maize)).